The primary structure comprises 363 residues: 3-isopropylmalate dehydrogenase (363 aa).

79–92 (GPKWEHLPPNDQPE) contacts NAD(+). Positions 100, 110, 139, and 228 each coordinate substrate. Aspartate 228, aspartate 252, and aspartate 256 together coordinate Mg(2+). Residue 286-298 (GSAPDIAGKNIAN) participates in NAD(+) binding.

Belongs to the isocitrate and isopropylmalate dehydrogenases family. LeuB type 1 subfamily. In terms of assembly, homodimer. The cofactor is Mg(2+). Requires Mn(2+) as cofactor.

Its subcellular location is the cytoplasm. It carries out the reaction (2R,3S)-3-isopropylmalate + NAD(+) = 4-methyl-2-oxopentanoate + CO2 + NADH. Its pathway is amino-acid biosynthesis; L-leucine biosynthesis; L-leucine from 3-methyl-2-oxobutanoate: step 3/4. In terms of biological role, catalyzes the oxidation of 3-carboxy-2-hydroxy-4-methylpentanoate (3-isopropylmalate) to 3-carboxy-4-methyl-2-oxopentanoate. The product decarboxylates to 4-methyl-2 oxopentanoate. The protein is 3-isopropylmalate dehydrogenase of Vibrio vulnificus (strain YJ016).